Consider the following 356-residue polypeptide: Vesicular integral-membrane protein VIP36 (356 aa).

Positions 1 to 44 (MAAEGWIWRWGWGRRCLGRPGLLGPGPGPTTPLFLLLLLGSVTA) are cleaved as a signal peptide. At 45 to 322 (DITDGNSEHL…FRSGPLTGWR (278 aa)) the chain is on the lumenal side. Residues 52-276 (EHLKREHSLI…DIISMKLFQL (225 aa)) enclose the L-type lectin-like domain. Positions 96 and 131 each coordinate a carbohydrate. Residues Asp-162, Tyr-164, and Asn-166 each coordinate Ca(2+). 164-166 (YPN) serves as a coordination point for a carbohydrate. Residue Asn-183 is glycosylated (N-linked (GlcNAc...) asparagine). Residue His-190 participates in a carbohydrate binding. Residue Asp-193 coordinates Ca(2+). A disulfide bond links Cys-202 and Cys-239. Residue 260-262 (GDL) coordinates a carbohydrate. Residues 323–345 (VFLLLLCALLGIVVCAVVGAVVF) form a helical membrane-spanning segment. Residues 346–356 (QKRQERNKRFY) are Cytoplasmic-facing.

Requires Ca(2+) as cofactor. In terms of tissue distribution, ubiquitous.

It localises to the endoplasmic reticulum-Golgi intermediate compartment membrane. The protein localises to the golgi apparatus membrane. It is found in the endoplasmic reticulum membrane. Its function is as follows. Plays a role as an intracellular lectin in the early secretory pathway. Interacts with N-acetyl-D-galactosamine and high-mannose type glycans and may also bind to O-linked glycans. Involved in the transport and sorting of glycoproteins carrying high mannose-type glycans. This chain is Vesicular integral-membrane protein VIP36 (LMAN2), found in Homo sapiens (Human).